We begin with the raw amino-acid sequence, 163 residues long: S-ribosylhomocysteine lyase (163 aa).

Fe cation is bound by residues histidine 54, histidine 58, and cysteine 128.

Belongs to the LuxS family. As to quaternary structure, homodimer. Fe cation is required as a cofactor.

It carries out the reaction S-(5-deoxy-D-ribos-5-yl)-L-homocysteine = (S)-4,5-dihydroxypentane-2,3-dione + L-homocysteine. Functionally, involved in the synthesis of autoinducer 2 (AI-2) which is secreted by bacteria and is used to communicate both the cell density and the metabolic potential of the environment. The regulation of gene expression in response to changes in cell density is called quorum sensing. Catalyzes the transformation of S-ribosylhomocysteine (RHC) to homocysteine (HC) and 4,5-dihydroxy-2,3-pentadione (DPD). The sequence is that of S-ribosylhomocysteine lyase from Wolinella succinogenes (strain ATCC 29543 / DSM 1740 / CCUG 13145 / JCM 31913 / LMG 7466 / NCTC 11488 / FDC 602W) (Vibrio succinogenes).